Here is a 376-residue protein sequence, read N- to C-terminus: Chaperone protein DnaJ (376 aa).

Positions 5 to 70 (DYYEVLGAAK…QKRAAYDQFG (66 aa)) constitute a J domain. A CR-type zinc finger spans residues 134–212 (GCDEKIRIPT…CGGQGRVQNT (79 aa)). 8 residues coordinate Zn(2+): cysteine 147, cysteine 150, cysteine 164, cysteine 167, cysteine 186, cysteine 189, cysteine 200, and cysteine 203. CXXCXGXG motif repeat units lie at residues 147-154 (CDVCHGSG), 164-171 (CTTCGGVG), 186-193 (CPTCKGEG), and 200-207 (CGNCGGQG).

The protein belongs to the DnaJ family. As to quaternary structure, homodimer. It depends on Zn(2+) as a cofactor.

The protein localises to the cytoplasm. Participates actively in the response to hyperosmotic and heat shock by preventing the aggregation of stress-denatured proteins and by disaggregating proteins, also in an autonomous, DnaK-independent fashion. Unfolded proteins bind initially to DnaJ; upon interaction with the DnaJ-bound protein, DnaK hydrolyzes its bound ATP, resulting in the formation of a stable complex. GrpE releases ADP from DnaK; ATP binding to DnaK triggers the release of the substrate protein, thus completing the reaction cycle. Several rounds of ATP-dependent interactions between DnaJ, DnaK and GrpE are required for fully efficient folding. Also involved, together with DnaK and GrpE, in the DNA replication of plasmids through activation of initiation proteins. The chain is Chaperone protein DnaJ from Alcanivorax borkumensis (strain ATCC 700651 / DSM 11573 / NCIMB 13689 / SK2).